The sequence spans 336 residues: tRNA-cytidine(32) 2-sulfurtransferase (336 aa).

A disordered region spans residues 1–42 (MNAPDTLTGLEANAPVTEEAPAASEAERKRAHTRREQKEQYE). The PP-loop motif motif lies at 75 to 80 (SGGKDS). Residues Cys150, Cys153, and Cys241 each contribute to the [4Fe-4S] cluster site. Residues 301–328 (PHGDIAFDEEPCSADSASNQTQRPSQTV) are disordered. Over residues 315–328 (DSASNQTQRPSQTV) the composition is skewed to polar residues.

This sequence belongs to the TtcA family. As to quaternary structure, homodimer. Mg(2+) is required as a cofactor. It depends on [4Fe-4S] cluster as a cofactor.

It is found in the cytoplasm. The catalysed reaction is cytidine(32) in tRNA + S-sulfanyl-L-cysteinyl-[cysteine desulfurase] + AH2 + ATP = 2-thiocytidine(32) in tRNA + L-cysteinyl-[cysteine desulfurase] + A + AMP + diphosphate + H(+). The protein operates within tRNA modification. In terms of biological role, catalyzes the ATP-dependent 2-thiolation of cytidine in position 32 of tRNA, to form 2-thiocytidine (s(2)C32). The sulfur atoms are provided by the cysteine/cysteine desulfurase (IscS) system. This Paraburkholderia phymatum (strain DSM 17167 / CIP 108236 / LMG 21445 / STM815) (Burkholderia phymatum) protein is tRNA-cytidine(32) 2-sulfurtransferase.